The primary structure comprises 347 residues: GMP reductase (347 aa).

108–131 (ADFEKTKQILDLNPALNFVCIDVA) serves as a coordination point for NADP(+). K(+) is bound by residues Gly181 and Gly183. The Thioimidate intermediate role is filled by Cys186. Residue 216–239 (IVSDGGCTTPGDVAKAFGGGADFV) coordinates NADP(+).

It belongs to the IMPDH/GMPR family. GuaC type 1 subfamily. Homotetramer.

It carries out the reaction IMP + NH4(+) + NADP(+) = GMP + NADPH + 2 H(+). In terms of biological role, catalyzes the irreversible NADPH-dependent deamination of GMP to IMP. It functions in the conversion of nucleobase, nucleoside and nucleotide derivatives of G to A nucleotides, and in maintaining the intracellular balance of A and G nucleotides. In Escherichia coli O7:K1 (strain IAI39 / ExPEC), this protein is GMP reductase.